Here is a 413-residue protein sequence, read N- to C-terminus: NADPH dehydrogenase afvA (413 aa).

53–56 (APLC) is a binding site for FMN. Y58 lines the substrate pocket. FMN is bound by residues A88 and Q130. 211 to 214 (HAAH) contacts substrate. FMN is bound by residues R264 and 370–371 (GR).

This sequence belongs to the NADH:flavin oxidoreductase/NADH oxidase family. NamA subfamily. FMN is required as a cofactor.

The enzyme catalyses A + NADPH + H(+) = AH2 + NADP(+). Its pathway is secondary metabolite biosynthesis. Its function is as follows. NADPH dehydrogenase; part of the gene cluster that mediates the biosynthesis of aflavarin, a bicoumarin that exhibits anti-insectan activity against the fungivorous beetle C.hemipterus. This chain is NADPH dehydrogenase afvA, found in Aspergillus flavus (strain ATCC 200026 / FGSC A1120 / IAM 13836 / NRRL 3357 / JCM 12722 / SRRC 167).